The primary structure comprises 558 residues: Zinc finger protein piragua (558 aa).

A ZAD domain is found at 15-94; the sequence is STCRLCHHNT…QEREQSLQEQ (80 aa). 4 residues coordinate Zn(2+): Cys-17, Cys-20, Cys-67, and Cys-70. Residues 132-177 show a composition bias toward acidic residues; sequence LAESSEEEFALGSDGEYENYDDDDEEEEEDYDEEDEEDGQNGEDVD. Residues 132–178 form a disordered region; that stretch reads LAESSEEEFALGSDGEYENYDDDDEEEEEDYDEEDEEDGQNGEDVDM. 9 consecutive C2H2-type zinc fingers follow at residues 208-231, 237-260, 266-288, 294-316, 322-344, 350-372, 414-436, 441-464, and 468-490; these read FLCQ…LAAH, YCCN…KTLH, YVCA…TIVH, FTCN…MRIH, FVCQ…TRSH, FQCG…QQVH, YHCD…QALH, FACK…LEAH, and FTCG…LKVH.

Its function is as follows. May be involved in transcriptional regulation. The function of this protein is unclear. According to one report, it is required for development and viability since mutants display defects in several developmental morphogenetic processes including dorsal closure and head involution, and die by the first instar larval stage. It may also be involved in fwe-mediated cellular competition. However, according to another report, it is not required for development or viability since mutants have no visible phenotype and are fertile. The sequence is that of Zinc finger protein piragua from Drosophila melanogaster (Fruit fly).